The primary structure comprises 396 residues: Cathepsin D (396 aa).

Residues 1–18 (MKFLYLFLFAVFAWTSDA) form the signal peptide. The propeptide at 19 to 61 (IVRIPLKKFRSIRRTLSDSGLNVEQLLAGTNSLQHNQGFPSSN) is activation peptide. The Peptidase A1 domain occupies 76 to 393 (YYGEIGLGTP…DRESNRVGFA (318 aa)). Residue D94 is part of the active site. Residues C107 and C114 are joined by a disulfide bond. N-linked (GlcNAc...) asparagine glycosylation is present at N131. A disulfide bridge connects residues C272 and C276. Residue D281 is part of the active site. C315 and C352 are disulfide-bonded.

This sequence belongs to the peptidase A1 family. In terms of assembly, monomer.

The protein localises to the lysosome. The catalysed reaction is Specificity similar to, but narrower than, that of pepsin A. Does not cleave the 4-Gln-|-His-5 bond in B chain of insulin.. With respect to regulation, inhibited by pepstatin. Its function is as follows. Acid protease active in intracellular protein breakdown. The protein is Cathepsin D (ctsd) of Clupea harengus (Atlantic herring).